We begin with the raw amino-acid sequence, 154 residues long: Superoxide dismutase [Cu-Zn] (154 aa).

Residues H47, H49, and H64 each coordinate Cu cation. Residues C58 and C147 are joined by a disulfide bond. Residues H64, H72, H81, and D84 each coordinate Zn(2+). H121 is a Cu cation binding site. Residues 124-137 (TDDLGRGDSEESKK) are compositionally biased toward basic and acidic residues. The segment at 124-144 (TDDLGRGDSEESKKTGNAGAR) is disordered. Substrate is bound at residue R144.

It belongs to the Cu-Zn superoxide dismutase family. Homodimer. Cu cation is required as a cofactor. The cofactor is Zn(2+).

It is found in the cytoplasm. It catalyses the reaction 2 superoxide + 2 H(+) = H2O2 + O2. Destroys radicals which are normally produced within the cells and which are toxic to biological systems. In Emericella nidulans (strain FGSC A4 / ATCC 38163 / CBS 112.46 / NRRL 194 / M139) (Aspergillus nidulans), this protein is Superoxide dismutase [Cu-Zn] (sodA).